The following is a 183-amino-acid chain: Caltractin ICL1f (183 aa).

Residues 1–19 (MARRGQQPPQQQQQAQPAQ) show a composition bias toward low complexity. A disordered region spans residues 1–30 (MARRGQQPPQQQQQAQPAQKNQAGKFNPAE). EF-hand domains are found at residues 39–74 (EEVL…LGFE), 75–110 (AKNQ…RISE), 112–147 (DSKA…LGET), and 148–183 (MDDS…KTFA). The Ca(2+) site is built by D52, D54, T56, S58, E63, D88, D90, S92, Q94, and E99.

The protein belongs to the centrin family. As to quaternary structure, monomer.

The protein resides in the cytoplasm. The protein localises to the cytoskeleton. In terms of biological role, plays a fundamental role in microtubule organizing center structure and function. Component of the infraciliary lattice (ICL) and the ciliary basal bodies. In Paramecium tetraurelia, this protein is Caltractin ICL1f (Icl1f).